A 65-amino-acid polypeptide reads, in one-letter code: Large ribosomal subunit protein bL35 (65 aa).

The tract at residues 1-28 is disordered; sequence MPKMKTHRGAAKRFKKTGTGKIKRGQSK.

The protein belongs to the bacterial ribosomal protein bL35 family.

In Acidobacterium capsulatum (strain ATCC 51196 / DSM 11244 / BCRC 80197 / JCM 7670 / NBRC 15755 / NCIMB 13165 / 161), this protein is Large ribosomal subunit protein bL35.